We begin with the raw amino-acid sequence, 866 residues long: Protein mono-ADP-ribosyltransferase PARP9 (866 aa).

At serine 42 the chain carries Phosphoserine. 2 consecutive Macro domains span residues 109–298 and 313–492; these read QRVF…ESIL and ASTM…TKRS. One can recognise a PARP catalytic domain in the interval 635–853; it reads TNQQEKLDKM…YSSGPGMVSS (219 aa).

Belongs to the ARTD/PARP family. As to quaternary structure, forms a stable complex with E3 ligase DTX3L; the interaction is required for PARP9 mediated ADP-ribosylation of ubiquitin. Interacts (via PARP catalytic domain) with DTX3L (via N-terminus). Forms a complex with STAT1 and DTX3L independently of IFNB1 or IFNG-mediated STAT1 'Tyr-701' phosphorylation. Forms a complex with STAT1, DTX3L and histone H2B H2BC9/H2BJ; the interaction is likely to induce H2BC9/H2BJ ubiquitination. Interacts (via N-terminus) with STAT1. Interacts with PARP14 in IFNG-stimulated macrophages; the interaction prevents PARP14-mediated STAT1 and STAT6 ADP-riboslylation. Interacts with PARP1 (when poly-ADP-ribosylated). ADP-ribosylated by PARP14. Highly expressed in the thymus and intestine. Expressed in macrophages.

Its subcellular location is the cytoplasm. It is found in the cytosol. The protein localises to the nucleus. It carries out the reaction [protein]-C-terminal glycine + NAD(+) = [protein]-C-terminal O-(ADP-D-ribosyl)-glycine + nicotinamide. With respect to regulation, binding to poly(ADP-ribose) does not affect its activity. Functionally, ADP-ribosyltransferase which, in association with E3 ligase DTX3L, plays a role in DNA damage repair and in immune responses including interferon-mediated antiviral defenses. Within the complex, enhances DTX3L E3 ligase activity which is further enhanced by PARP9 binding to poly(ADP-ribose). In addition, positively regulates DTXL3 protein levels. In association with DTX3L and in presence of E1 and E2 enzymes, mediates NAD(+)-dependent mono-ADP-ribosylation of ubiquitin which prevents ubiquitin conjugation to substrates such as histones. During DNA repair, PARP1 recruits PARP9/BAL1-DTX3L complex to DNA damage sites via PARP9 binding to ribosylated PARP1. Subsequent PARP1-dependent PARP9/BAL1-DTX3L-mediated ubiquitination promotes the rapid and specific recruitment of 53BP1/TP53BP1, UIMC1/RAP80, and BRCA1 to DNA damage sites. In response to DNA damage, PARP9-DTX3L complex is required for efficient non-homologous end joining (NHEJ) but the complex function is restrained by PARP9 activity. Dispensable for B-cell receptor (BCR) assembly through V(D)J recombination and class switch recombination (CSR). In macrophages, positively regulates pro-inflammatory cytokines production in response to IFNG stimulation by suppressing PARP14-mediated STAT1 ADP-ribosylation and thus promoting STAT1 phosphorylation. Also suppresses PARP14-mediated STAT6 ADP-ribosylation. In Mus musculus (Mouse), this protein is Protein mono-ADP-ribosyltransferase PARP9 (Parp9).